Reading from the N-terminus, the 495-residue chain is MSKEILLAAEAVSNEKLLPREKIFEALESAIAISTKKKFEYETDIRVSINPKTGEFDTFRRWLVVDEVKVPTKEITLEAAQFDDPNLQLGEYVEDQIESIAFDRIAMQTARQVISTKIREAERAKVVEQFREEEGKIVTGTVKKVSRDSIILDLGNKAEAMIAREDMLPRENFRPGDRVRGVLYKVNPEGKTAQLFVTRSKPEMLIELFRIEVPEIGEEMIEIRGAARDAGSRAKIAVKSNDKRIDPVGACVGMRGARVQVITNELGGERVDIVLWDDNPAQFVINAMAPADVSSIIVDEDNHSMDIAVEADNLAQAIGRNGQNVRLATQLTGWTLNVMTTDELNAKHQAEDNKVLNLFINALELDEEFAQILVEEGFTSLEEIAYVPMNELTAIDGLEDEDLVEELQTRAKNAITAAAVAEEEALKKANVEDRLLNLEGMNRHVAIKLAEKQITTLEELAEQGVDDLTDIEELTAEQAADLIMAARNICWFGEE.

The S1 motif domain maps to 135 to 200 (GKIVTGTVKK…KTAQLFVTRS (66 aa)). The region spanning 302 to 374 (NHSMDIAVEA…LDEEFAQILV (73 aa)) is the KH domain.

It belongs to the NusA family. As to quaternary structure, monomer. Binds directly to the core enzyme of the DNA-dependent RNA polymerase and to nascent RNA.

It localises to the cytoplasm. Functionally, participates in both transcription termination and antitermination. The polypeptide is Transcription termination/antitermination protein NusA (Haemophilus influenzae (strain ATCC 51907 / DSM 11121 / KW20 / Rd)).